An 866-amino-acid chain; its full sequence is Autophagy-related protein 9 (866 aa).

The Cytoplasmic segment spans residues M1–W94. A helical membrane pass occupies residues A95–V115. Over D116–T153 the chain is Lumenal. The helical transmembrane segment at L154–F174 threads the bilayer. Residues L175–R319 lie on the Cytoplasmic side of the membrane. An intramembrane segment occupies L320–V340. The Cytoplasmic portion of the chain corresponds to Y341–S404. A helical membrane pass occupies residues I405–A425. Residues F426 to E433 lie on the Lumenal side of the membrane. The chain crosses the membrane as a helical span at residues G434 to I454. Over S455 to G507 the chain is Cytoplasmic. The stretch at M508–V528 is an intramembrane region. Topologically, residues P529–R866 are cytoplasmic. Residues Q744–N781 form a disordered region. Polar residues predominate over residues N768–N781.

It belongs to the ATG9 family. In terms of assembly, homotrimer; forms a homotrimer with a central pore that forms a path between the two membrane leaflets. Expressed in roots, leaves, stems and flowers.

It localises to the preautophagosomal structure membrane. Phospholipid scramblase involved in autophagy by mediating autophagosomal membrane expansion. Cycles between the preautophagosomal structure/phagophore assembly site (PAS) and the cytoplasmic vesicle pool and supplies membrane for the growing autophagosome. Lipid scramblase activity plays a key role in preautophagosomal structure/phagophore assembly by distributing the phospholipids that arrive through ATG2 from the cytoplasmic to the luminal leaflet of the bilayer, thereby driving autophagosomal membrane expansion. In addition to autophagy, also plays a role in necrotic cell death. Plays an essential role in plant nutrient recycling. The polypeptide is Autophagy-related protein 9 (Arabidopsis thaliana (Mouse-ear cress)).